Here is a 195-residue protein sequence, read N- to C-terminus: Interferon tau-1 (195 aa).

The signal sequence occupies residues 1 to 23 (MAFVLSLLMALVLVSYGPGGSLG). 2 disulfides stabilise this stretch: Cys24–Cys122 and Cys52–Cys162.

Belongs to the alpha/beta interferon family. IFN-alphaII subfamily. In terms of tissue distribution, constitutively and exclusively expressed in the mononuclear cells of the extraembryonic trophectoderm.

It is found in the secreted. In terms of biological role, paracrine hormone primarily responsible for maternal recognition of pregnancy. Interacts with endometrial receptors, probably type I interferon receptors, and blocks estrogen receptor expression, preventing the estrogen-induced increase in oxytocin receptor expression in the endometrium. This results in the suppression of the pulsatile endometrial release of the luteolytic hormone prostaglandin F2-alpha, hindering the regression of the corpus luteum (luteolysis) and therefore a return to ovarian cyclicity. This, and a possible direct effect of IFN-tau on prostaglandin synthesis, leads in turn to continued ovarian progesterone secretion, which stimulates the secretion by the endometrium of the nutrients required for the growth of the conceptus. In summary, displays particularly high antiviral and antiproliferative potency concurrently with particular weak cytotoxicity, high antiluteolytic activity and immunomodulatory properties. In contrast with other IFNs, IFN-tau is not virally inducible. The chain is Interferon tau-1 (IFNT1) from Ovis aries (Sheep).